Reading from the N-terminus, the 629-residue chain is Filament-like plant protein 2 (629 aa).

2 coiled-coil regions span residues W34–R61 and N102–E171. The disordered stretch occupies residues S186 to S205. Positions S193 to E203 are enriched in basic and acidic residues. Residues E270–E493 are a coiled coil.

Belongs to the FPP family. Interacts with WPP/MAF proteins. Binds to COG2; this interaction promotes the association between cortical microtubules and EXO70A1. In terms of tissue distribution, accumulates in preferentially xylem cells.

The protein resides in the vesicle. Ensures, when in complex with FPP3/VETH1 and COG2, the correct secondary cell wall (SCW) deposition pattern by recruiting exocyst components to cortical microtubules in xylem cells during secondary cell wall deposition by recruiting EXO70A1. The polypeptide is Filament-like plant protein 2 (Arabidopsis thaliana (Mouse-ear cress)).